The primary structure comprises 366 residues: 3-dehydroquinate synthase (366 aa).

NAD(+) contacts are provided by residues aspartate 69–lysine 74, glycine 103–aspartate 107, threonine 127–threonine 128, lysine 140, lysine 149, and threonine 167–threonine 170. Glutamate 182, histidine 245, and histidine 262 together coordinate Zn(2+).

Belongs to the sugar phosphate cyclases superfamily. Dehydroquinate synthase family. The cofactor is Co(2+). Zn(2+) is required as a cofactor. Requires NAD(+) as cofactor.

Its subcellular location is the cytoplasm. It catalyses the reaction 7-phospho-2-dehydro-3-deoxy-D-arabino-heptonate = 3-dehydroquinate + phosphate. Its pathway is metabolic intermediate biosynthesis; chorismate biosynthesis; chorismate from D-erythrose 4-phosphate and phosphoenolpyruvate: step 2/7. Functionally, catalyzes the conversion of 3-deoxy-D-arabino-heptulosonate 7-phosphate (DAHP) to dehydroquinate (DHQ). The polypeptide is 3-dehydroquinate synthase (Pseudomonas fluorescens (strain SBW25)).